Here is a 117-residue protein sequence, read N- to C-terminus: Hemerythrin subunit beta (117 aa).

7 residues coordinate Fe cation: His-24, His-53, Glu-57, His-72, His-76, His-105, and Asp-110.

The protein belongs to the hemerythrin family. As to quaternary structure, octamer composed of two types of chains: alpha and beta.

Hemerythrin is a respiratory protein in blood cells of certain marine worms. The oxygen-binding site in each chain contains two iron atoms. The chain is Hemerythrin subunit beta from Lingula reevii (Inarticulated brachiopod).